The following is a 62-amino-acid chain: Potassium channel toxin alpha-KTx 18.3 (62 aa).

An N-terminal signal peptide occupies residues 1 to 26; the sequence is MHFSGVAFILISMVLIGSIFETTVEA. Cystine bridges form between Cys34-Cys53, Cys39-Cys58, and Cys43-Cys60.

It belongs to the short scorpion toxin superfamily. Potassium channel inhibitor family. Alpha-KTx 18 subfamily. Expressed by the venom gland.

The protein localises to the secreted. In terms of biological role, probable voltage-gated potassium channel inhibitor. The chain is Potassium channel toxin alpha-KTx 18.3 from Tityus discrepans (Venezuelan scorpion).